We begin with the raw amino-acid sequence, 152 residues long: Protein FERTILITY RESTORER RF2, mitochondrial (152 aa).

The transit peptide at M1–C52 directs the protein to the mitochondrion. Residues C52–V69 show a composition bias toward polar residues. Residues C52–G101 are disordered.

Its subcellular location is the mitochondrion. Functionally, non-functional allele of the RF2 fertility restorer of rice varieties with LD-type cytoplasmic male sterility (CMS). Non-functional RF2 alleles are found in japonica cultivars Taichung 65 and Nipponbare (AC F1SZ44), and is due to the presence of Thr-78 which replaces Ile-78 in the functional allele. Functional allele is found in the japonica cultivars Fukuyama and Owarihatamochi (AC F1SZ42), and indica cultivar Kasalath (AC F1SZ41). This chain is Protein FERTILITY RESTORER RF2, mitochondrial, found in Oryza sativa subsp. japonica (Rice).